The chain runs to 434 residues: Glycylpeptide N-tetradecanoyltransferase 1 (434 aa).

The tract at residues 1 to 24 is disordered; sequence MADNNSPPGSVEQKADQIVEANPL. At alanine 2 the chain carries N-acetylalanine. Residues 48–51, 184–186, and 192–196 each bind tetradecanoyl-CoA; these read HKFW, LCV, and SKRLA. The active-site Proton acceptor; via carboxylate is leucine 434.

This sequence belongs to the NMT family. As to expression, expressed ubiquitously, with higher levels in young tissues (at protein level).

The protein resides in the cytoplasm. It catalyses the reaction N-terminal glycyl-[protein] + tetradecanoyl-CoA = N-tetradecanoylglycyl-[protein] + CoA + H(+). In terms of biological role, adds a myristoyl group to the N-terminal glycine residue of certain cellular proteins. Can also use decanoyl-CoA and lauroyl-CoA as substrates. This Arabidopsis thaliana (Mouse-ear cress) protein is Glycylpeptide N-tetradecanoyltransferase 1 (NMT1).